Consider the following 129-residue polypeptide: D-ribose pyranase 2 (129 aa).

Residue histidine 20 is the Proton donor of the active site. Residues aspartate 28, histidine 96, and 118-120 (YAN) each bind substrate.

It belongs to the RbsD / FucU family. RbsD subfamily. Homodecamer.

It is found in the cytoplasm. The catalysed reaction is beta-D-ribopyranose = beta-D-ribofuranose. It functions in the pathway carbohydrate metabolism; D-ribose degradation; D-ribose 5-phosphate from beta-D-ribopyranose: step 1/2. Its function is as follows. Catalyzes the interconversion of beta-pyran and beta-furan forms of D-ribose. The sequence is that of D-ribose pyranase 2 from Streptomyces griseus subsp. griseus (strain JCM 4626 / CBS 651.72 / NBRC 13350 / KCC S-0626 / ISP 5235).